The primary structure comprises 207 residues: Small ribosomal subunit protein uS4 (207 aa).

The interval 32-55 is disordered; it reads CKLDSKPGQHGRTSGARTSDYGTQ. A compositionally biased stretch (polar residues) spans 42–53; sequence GRTSGARTSDYG. The S4 RNA-binding domain occupies 97-158; that stretch reads SRLDNVVYRM…TKKKQARILE (62 aa).

The protein belongs to the universal ribosomal protein uS4 family. Part of the 30S ribosomal subunit. Contacts protein S5. The interaction surface between S4 and S5 is involved in control of translational fidelity.

Its function is as follows. One of the primary rRNA binding proteins, it binds directly to 16S rRNA where it nucleates assembly of the body of the 30S subunit. Functionally, with S5 and S12 plays an important role in translational accuracy. The chain is Small ribosomal subunit protein uS4 from Paraburkholderia phytofirmans (strain DSM 17436 / LMG 22146 / PsJN) (Burkholderia phytofirmans).